Consider the following 286-residue polypeptide: 4-hydroxybenzoate octaprenyltransferase (286 aa).

The next 7 membrane-spanning stretches (helical) occupy residues 20-40 (IGTL…AGGM), 43-63 (LKVL…GCII), 95-115 (ILFA…NPLV), 142-162 (FLGV…TGEV), 167-187 (WWLF…YAMV), 210-230 (QIIG…GWAA), and 234-254 (LVYG…QKLI).

It belongs to the UbiA prenyltransferase family. Requires Mg(2+) as cofactor.

Its subcellular location is the cell inner membrane. The enzyme catalyses all-trans-octaprenyl diphosphate + 4-hydroxybenzoate = 4-hydroxy-3-(all-trans-octaprenyl)benzoate + diphosphate. The protein operates within cofactor biosynthesis; ubiquinone biosynthesis. Its function is as follows. Catalyzes the prenylation of para-hydroxybenzoate (PHB) with an all-trans polyprenyl group. Mediates the second step in the final reaction sequence of ubiquinone-8 (UQ-8) biosynthesis, which is the condensation of the polyisoprenoid side chain with PHB, generating the first membrane-bound Q intermediate 3-octaprenyl-4-hydroxybenzoate. In Shewanella sediminis (strain HAW-EB3), this protein is 4-hydroxybenzoate octaprenyltransferase.